The primary structure comprises 755 residues: Polycomb protein SUZ12 (755 aa).

3 disordered regions span residues 26–79 (KMGN…RRIS), 333–377 (NANG…SRRA), and 392–420 (AVGR…SDDR). The segment covering 30-42 (KASSQAQKRSQSQ) has biased composition (low complexity). Polar residues-rich tracts occupy residues 43–57 (TGDS…DGSG) and 349–359 (TQPNGTHNEGT). Positions 411-420 (GEDHPPSDDR) are enriched in basic and acidic residues. The C2H2-type zinc-finger motif lies at 436–458 (FACLICGAENERLSQLRAHYMCH). Positions 580 to 645 (IDDSWLLLKH…KADWLVSKRS (66 aa)) are polycomb protein VEFS-Box.

It belongs to the VEFS (VRN2-EMF2-FIS2-SU(Z)12) family. Component of the polycomb repressive complex 2 (PRC2) that consists of four core subunits icluding EZH2, EED, SUZ12, and RBBP4, among which EZH2 is the catalytic subunit and which minimally requires EED and SUZ12 for catalysis.

Its subcellular location is the nucleus. Its function is as follows. Component of the of the Polycomb Repressive Complex 2 (PRC2), a histone H3 lysine methyltransferase responsible for generating mono-, di-, and tri-methylation on Lys27 (H3K27me1, H3K27me2 and H3K27me3). The tri-methylated form is known to be critical in gene repression, and its proper placement is essential in defining repression patterns during development. SUZ12 is not a catalytic subunit but is required for the complex regulation of histone H3 lysine methylation by EZH2. This chain is Polycomb protein SUZ12, found in Chaetomium thermophilum (strain DSM 1495 / CBS 144.50 / IMI 039719) (Thermochaetoides thermophila).